Reading from the N-terminus, the 389-residue chain is MSSKHKRRILNLPLKLVLTQEGSEFFIKQNRKLMKLKLAEHVEDYGIALDAFAPKTVQGLLLSGYVSLIEVSPPEFASSRQEIIDLSKLIVHSILYRQYDCYVFRQILNSEVIKKWNRSNPGSSIDEHANLNAPFIYNHLKQHEAHVTQIKHHILRLLHASLAACEERTPKEKNTLLFLGEKFLDTLRPFTWFIISKFQHAPDMGSVLSSIHTSLAQYLNKARIAEYIALVLVELLINEENTNLKKEVQKLFPDLEDAQEALCDEGIRRRIVAELKHNAESLFISWKLQGRSVSTAGTRRKLKITVYGRNDYPQEMRNCLQDAKVVNADTDTLVDYCQQTIDTAKHANLGVYYISYLSEACKEANVRFESSLNRFTRSEFTTVDLSFEF.

This is an uncharacterized protein from Treponema pallidum (strain Nichols).